A 46-amino-acid polypeptide reads, in one-letter code: Large ribosomal subunit protein bL33B (46 aa).

Belongs to the bacterial ribosomal protein bL33 family.

The chain is Large ribosomal subunit protein bL33B (rpmG2) from Mycoplasmopsis pulmonis (strain UAB CTIP) (Mycoplasma pulmonis).